A 202-amino-acid polypeptide reads, in one-letter code: Small ribosomal subunit protein uS4c (202 aa).

One can recognise an S4 RNA-binding domain in the interval 90–148 (MRLDNVIFRLGMSSTIPGARQLVNHRHIMINDEMVDTPGYNCKPRDIITLKNISESRSG).

This sequence belongs to the universal ribosomal protein uS4 family. As to quaternary structure, part of the 30S ribosomal subunit. Contacts protein S5. The interaction surface between S4 and S5 is involved in control of translational fidelity.

It is found in the plastid. The protein localises to the chloroplast. Functionally, one of the primary rRNA binding proteins, it binds directly to 16S rRNA where it nucleates assembly of the body of the 30S subunit. Its function is as follows. With S5 and S12 plays an important role in translational accuracy. The chain is Small ribosomal subunit protein uS4c (rps4) from Haplomitrium hookeri (Hooker's flapwort).